A 495-amino-acid chain; its full sequence is Maturase K (495 aa).

Belongs to the intron maturase 2 family. MatK subfamily.

It is found in the plastid. The protein resides in the chloroplast. Usually encoded in the trnK tRNA gene intron. Probably assists in splicing its own and other chloroplast group II introns. This chain is Maturase K, found in Torreya californica (California nutmeg).